The following is a 214-amino-acid chain: Protein DEHYDRATION-INDUCED 19 homolog 5 (214 aa).

The residue at position 110 (Ser110) is a Phosphoserine. The segment at 148–185 (PKKSKLVQPDSSSEASMEDNSLIRDSTEKDWESPSPLS) is disordered. Residues 156 to 166 (PDSSSEASMED) are compositionally biased toward polar residues. A compositionally biased stretch (basic and acidic residues) spans 168 to 179 (SLIRDSTEKDWE).

This sequence belongs to the Di19 family. Post-translationally, phosphorylated in vitro by CPK3 or CPK11. In terms of tissue distribution, expressed in seedlings, roots, leaves, stems, flowers and siliques.

It is found in the nucleus. This chain is Protein DEHYDRATION-INDUCED 19 homolog 5 (DI19-5), found in Arabidopsis thaliana (Mouse-ear cress).